A 502-amino-acid chain; its full sequence is Glycerol kinase (502 aa).

Threonine 14 is an ADP binding site. Positions 14, 15, and 16 each coordinate ATP. Threonine 14 is a sn-glycerol 3-phosphate binding site. Position 18 (arginine 18) interacts with ADP. Residues arginine 84, glutamate 85, and tyrosine 136 each coordinate sn-glycerol 3-phosphate. Arginine 84, glutamate 85, and tyrosine 136 together coordinate glycerol. The residue at position 232 (histidine 232) is a Phosphohistidine; by HPr. Aspartate 246 serves as a coordination point for sn-glycerol 3-phosphate. Aspartate 246 and glutamine 247 together coordinate glycerol. ADP is bound by residues threonine 268 and glycine 311. The ATP site is built by threonine 268, glycine 311, glutamine 315, and glycine 412. Positions 412 and 416 each coordinate ADP.

It belongs to the FGGY kinase family. As to quaternary structure, homotetramer and homodimer (in equilibrium). The phosphoenolpyruvate-dependent sugar phosphotransferase system (PTS), including enzyme I, and histidine-containing protein (HPr) are required for the phosphorylation, which leads to the activation of the enzyme.

It catalyses the reaction glycerol + ATP = sn-glycerol 3-phosphate + ADP + H(+). Its pathway is polyol metabolism; glycerol degradation via glycerol kinase pathway; sn-glycerol 3-phosphate from glycerol: step 1/1. Activated by phosphorylation and inhibited by fructose 1,6-bisphosphate (FBP). Functionally, key enzyme in the regulation of glycerol uptake and metabolism. Catalyzes the phosphorylation of glycerol to yield sn-glycerol 3-phosphate. In Streptococcus pneumoniae serotype 2 (strain D39 / NCTC 7466), this protein is Glycerol kinase.